We begin with the raw amino-acid sequence, 157 residues long: uncharacterized protein (157 aa).

The first 28 residues, 1 to 28, serve as a signal peptide directing secretion; the sequence is MKRLFMKASLVLFAVVFVFAVKGAPAKA.

This is an uncharacterized protein from Bacillus subtilis (strain 168).